The primary structure comprises 59 residues: Large ribosomal subunit protein bL32 (59 aa).

A disordered region spans residues 1–59 (MAVQQNRKTRSKRGMRRSHDALSAAALSTDATTGEVHRRHHVSPDGFYRGKQVVEARDE). Residues 7–16 (RKTRSKRGMR) are compositionally biased toward basic residues. Positions 21–33 (ALSAAALSTDATT) are enriched in low complexity.

The protein belongs to the bacterial ribosomal protein bL32 family.

This is Large ribosomal subunit protein bL32 from Marinobacter nauticus (strain ATCC 700491 / DSM 11845 / VT8) (Marinobacter aquaeolei).